The sequence spans 572 residues: Ribonuclease Y (572 aa).

Residues 1-21 (MPTLYVILSLLLGLIGGVLVQ) traverse the membrane as a helical segment. Disordered regions lie at residues 59-85 (HEAA…DAAE) and 110-142 (QLEA…ERED). Composition is skewed to basic and acidic residues over residues 110–119 (QLEAEREQAK) and 129–142 (LSTD…ERED). The KH domain occupies 262–322 (SVSVVPIPSD…LRREVARHVL (61 aa)). The 94-residue stretch at 388–481 (VLKHSVQVAH…VAAADAISAA (94 aa)) folds into the HD domain.

The protein belongs to the RNase Y family.

It is found in the cell membrane. Functionally, endoribonuclease that initiates mRNA decay. This Deinococcus radiodurans (strain ATCC 13939 / DSM 20539 / JCM 16871 / CCUG 27074 / LMG 4051 / NBRC 15346 / NCIMB 9279 / VKM B-1422 / R1) protein is Ribonuclease Y.